A 134-amino-acid polypeptide reads, in one-letter code: uncharacterized protein (134 aa).

A run of 3 helical transmembrane segments spans residues 9–29 (PYFL…HGTA), 49–69 (MLLV…LGLF), and 107–127 (ALLY…ACAL).

This sequence belongs to the DoxX family.

The protein resides in the cell membrane. This is an uncharacterized protein from Haemophilus influenzae (strain ATCC 51907 / DSM 11121 / KW20 / Rd).